Reading from the N-terminus, the 278-residue chain is Large ribosomal subunit protein uL2 (278 aa).

Disordered stretches follow at residues 1–58 (MAIR…GGGH) and 225–278 (VMNP…KNKR). Over residues 37 to 58 (LHGRGGRNAHGRITTRHKGGGH) the composition is skewed to basic residues. Over residues 253–267 (PEGRTRKNKASDKMI) the composition is skewed to basic and acidic residues. Positions 268-278 (VRRRRTGKNKR) are enriched in basic residues.

This sequence belongs to the universal ribosomal protein uL2 family. Part of the 50S ribosomal subunit. Forms a bridge to the 30S subunit in the 70S ribosome.

One of the primary rRNA binding proteins. Required for association of the 30S and 50S subunits to form the 70S ribosome, for tRNA binding and peptide bond formation. It has been suggested to have peptidyltransferase activity; this is somewhat controversial. Makes several contacts with the 16S rRNA in the 70S ribosome. This is Large ribosomal subunit protein uL2 from Rhodococcus erythropolis (strain PR4 / NBRC 100887).